Here is a 1270-residue protein sequence, read N- to C-terminus: Glycine betaine reductase ATRR (1270 aa).

The tract at residues 14–418 (FTQQVRASPN…MIKLRGYSVV (405 aa)) is adenylation (A) domain. A Carrier domain is found at 528 to 605 (KEDPIGIEDI…GHLDTVRAIR (78 aa)). An O-(pantetheine 4'-phosphoryl)serine modification is found at Ser-565. Positions 643–937 (KTVLLTGVTG…EPLSWDDWVA (295 aa)) are carboxylic acid reductase domain R1. Positions 1026 to 1256 (PLSGKVAVVT…IYALRQPEHV (231 aa)) are aldehyde reductase domain R2.

This sequence belongs to the NRP synthetase family.

Its activity is regulated as follows. The tetramethylammonium ion, which mimics the head group of glycine betaine, acts as a competitive inhibitor of ATRR A domain, whereas the potency decreased by three orders of magnitude with dimethylammonium. Choline is a mixed inhibitor for both glycine betaine reductase and aldehyde reductase activity but more potent in competition against glycine betaine in the first reduction step. Therefore, choline could act as a feedback inhibitor to regulate ATRR enzymatic activity. The lowered binding affinity of choline to R2 favors the release of choline after glycine betaine aldehyde reduction to avoid direct product inhibition. Its function is as follows. NRPS-like enzyme with an unusual domain architecture that converts back glycine betaine to choline via a 2-step reduction mechanism, and thereby can be an alternative source of choline. Permits direct reutilization of endogenously stored glycine betaine for on-demand biosynthesis of choline and choline derivatives, including phospholipid phosphatidylcholine (PC) which has an essential role in maintaining membrane integrity and functionality, or choline-O-sulfate, a mean for intracellular sulfate storage. Glycine betaine is activated by the adenylation (A) domain, and transferred to the thiolation (T) domain. Movement of the phosphopantetheine arm to the thioester reductase domain R1 then allows thioester reduction by NADPH of glycine betainoyl thioester to glycine betaine aldehyde, which is in turn reduced to choline by the aldehyde reductase domain R2. In Emericella nidulans (strain FGSC A4 / ATCC 38163 / CBS 112.46 / NRRL 194 / M139) (Aspergillus nidulans), this protein is Glycine betaine reductase ATRR.